We begin with the raw amino-acid sequence, 408 residues long: Myb/SANT-like DNA-binding domain-containing protein 4 (408 aa).

The Myb-like domain maps to 4-77; the sequence is LKRKRKSNFS…EVKRRYLDWR (74 aa). The stretch at 236 to 367 forms a coiled coil; it reads HLLVTLEKQK…IEKERLQDAL (132 aa).

This Xenopus tropicalis (Western clawed frog) protein is Myb/SANT-like DNA-binding domain-containing protein 4 (msantd4).